The chain runs to 243 residues: Nuclear protein UL4 homolog (243 aa).

Residues 193-226 (RPDDQTTPTPTPHQYTSQRRQPETNCPSPQPAFF) are disordered. Residues 205–219 (HQYTSQRRQPETNCP) are compositionally biased toward polar residues.

Belongs to the alphaherpesvirinae HHV-1 UL4 family.

It is found in the host nucleus. This chain is Nuclear protein UL4 homolog, found in Varicella-zoster virus (strain Oka vaccine) (HHV-3).